A 1041-amino-acid polypeptide reads, in one-letter code: Pre-mRNA-splicing factor ATP-dependent RNA helicase DHX16 (1041 aa).

Disordered regions lie at residues 101–207 and 371–391; these read EDSE…AYEE and LQGDEEPSAPPTSTQAQQKES. Serine 103, serine 106, and serine 107 each carry phosphoserine. The segment covering 119-130 has biased composition (basic residues); the sequence is QKKRKKRKHLRK. Serine 160 carries the post-translational modification Phosphoserine. The span at 166 to 207 shows a compositional bias: basic and acidic residues; sequence RTERERLQDLEERDAFAERVRQRDKDRTRNVLERSDKKAYEE. The segment covering 381–391 has biased composition (polar residues); it reads PTSTQAQQKES. One can recognise a Helicase ATP-binding domain in the interval 409-573; the sequence is LAAIANHQVL…FDDAPVFRIP (165 aa). Residue 422 to 429 coordinates ATP; it reads GETGSGKT. The DEAH box motif lies at 520 to 523; sequence DEAH. The Helicase C-terminal domain occupies 598-771; it reads SVLQIHVTQP…NVVLLLKSLG (174 aa). Threonine 712 carries the post-translational modification Phosphothreonine.

This sequence belongs to the DEAD box helicase family. DEAH subfamily. DDX16/PRP8 sub-subfamily. As to quaternary structure, component of pre-catalytic spliceosome complexes. Component of the minor spliceosome, which splices U12-type introns. Interacts with GPKOW. Interacts with TRIM6. Interacts with RIGI. As to expression, expressed in the spleen, thyroid and testis. Also expressed in the brain and cerebellum.

Its subcellular location is the nucleus. The protein resides in the nucleoplasm. The protein localises to the cytoplasm. The catalysed reaction is ATP + H2O = ADP + phosphate + H(+). In terms of biological role, required for pre-mRNA splicing as a component of the spliceosome. Contributes to pre-mRNA splicing after spliceosome formation and prior to the first transesterification reaction. As a component of the minor spliceosome, involved in the splicing of U12-type introns in pre-mRNAs. Also plays a role in innate antiviral response by acting as a pattern recognition receptor sensing splicing signals in viral RNA. Mechanistically, TRIM6 promotes the interaction between unanchored 'Lys-48'-polyubiquitin chains and DHX16, leading to DHX16 interaction with RIGI and ssRNA to amplify RIGI-dependent innate antiviral immune responses. The polypeptide is Pre-mRNA-splicing factor ATP-dependent RNA helicase DHX16 (DHX16) (Homo sapiens (Human)).